Consider the following 295-residue polypeptide: NAD kinase (295 aa).

The active-site Proton acceptor is aspartate 74. NAD(+) is bound by residues 74-75 (DG), 148-149 (NE), arginine 176, aspartate 178, and 189-194 (TAYAMS).

It belongs to the NAD kinase family. A divalent metal cation is required as a cofactor.

Its subcellular location is the cytoplasm. It carries out the reaction NAD(+) + ATP = ADP + NADP(+) + H(+). Its function is as follows. Involved in the regulation of the intracellular balance of NAD and NADP, and is a key enzyme in the biosynthesis of NADP. Catalyzes specifically the phosphorylation on 2'-hydroxyl of the adenosine moiety of NAD to yield NADP. The protein is NAD kinase of Acidithiobacillus ferrooxidans (strain ATCC 23270 / DSM 14882 / CIP 104768 / NCIMB 8455) (Ferrobacillus ferrooxidans (strain ATCC 23270)).